Reading from the N-terminus, the 583-residue chain is Torsin-1A-interacting protein 1 (583 aa).

The Nuclear segment spans residues 1–339 (MAGERWRAEG…DESSVKIKWW (339 aa)). A disordered region spans residues 23 to 208 (APIREGRRRL…PPLRSPRPDA (186 aa)). The residue at position 60 (serine 60) is a Phosphoserine. Basic and acidic residues-rich tracts occupy residues 70 to 101 (FEPR…EVRE) and 115 to 132 (GPQE…RLEQ). Residues serine 134, serine 142, serine 155, and serine 157 each carry the phosphoserine modification. A compositionally biased stretch (polar residues) spans 166 to 188 (SSQPVTSQTVSKKTVRTPETSVM). Serine 189 is modified (phosphoserine). Position 222 is a phosphothreonine (threonine 222). A phosphoserine mark is found at serine 228, serine 231, and serine 242. A Glycyl lysine isopeptide (Lys-Gly) (interchain with G-Cter in SUMO2) cross-link involves residue lysine 309. Residue serine 316 is modified to Phosphoserine. A helical transmembrane segment spans residues 340–360 (LLILVAALAMGIYWFFHTPVV). The interaction with TOR1A stretch occupies residues 356 to 583 (HTPVVETTAV…ENALKAGSCL (228 aa)). Positions 360 to 388 (VETTAVQEFQNQMKQLQSKYQSQDEKLWK) form a coiled coil. Topologically, residues 361–583 (ETTAVQEFQN…ENALKAGSCL (223 aa)) are perinuclear space. Asparagine 399 carries N-linked (GlcNAc...) asparagine glycosylation.

Belongs to the TOR1AIP family. Interacts with ATP1B4. Interacts with TOR1A (ATP-bound). Interacts with TOR1B, TOR2A and TOR3A. Interacts with VIM.

The protein localises to the nucleus inner membrane. Required for nuclear membrane integrity. Induces TOR1A and TOR1B ATPase activity and is required for their location on the nuclear membrane. Binds to A- and B-type lamins. Possible role in membrane attachment and assembly of the nuclear lamina. This Rattus norvegicus (Rat) protein is Torsin-1A-interacting protein 1 (Tor1aip1).